Consider the following 400-residue polypeptide: NADPH dehydrogenase 1 (400 aa).

Residues T38 and Q115 each contribute to the FMN site. Substrate is bound by residues H192 and N195. Y197 functions as the Proton donor in the catalytic mechanism. FMN contacts are provided by R244 and R349. Position 376 (Y376) interacts with substrate.

In terms of assembly, homodimer or heterodimer. FMN serves as cofactor.

It catalyses the reaction A + NADPH + H(+) = AH2 + NADP(+). Its function is as follows. Flavin-dependent enoate reductase that catalyzes the chemo- and stereoslective hydrogenation of electron-poor alkenes. The enzyme is reduced by NADPH, and oxygen, quinones, and alpha,beta-unsaturated aldehydes and ketones can act as electron acceptors to complete catalytic turnover. The physiological oxidant remains elusive. The chain is NADPH dehydrogenase 1 from Saccharomyces pastorianus (Lager yeast).